The sequence spans 89 residues: Small ribosomal subunit protein bS20 (89 aa).

This sequence belongs to the bacterial ribosomal protein bS20 family.

In terms of biological role, binds directly to 16S ribosomal RNA. This Syntrophus aciditrophicus (strain SB) protein is Small ribosomal subunit protein bS20.